The following is a 574-amino-acid chain: NEDD4-binding protein 2-like 2 (574 aa).

4 disordered regions span residues 82 to 110 (HKEM…LAPA), 127 to 161 (YKPP…QKFN), 182 to 204 (ENEN…QTLS), and 542 to 574 (TQKS…TDDY). Composition is skewed to basic and acidic residues over residues 129–141 (PPEK…RKNE) and 149–161 (DSKR…QKFN). Positions 162–196 (SKKLEIDTELSQFYKEIEELENENEASQGSCKEPE) form a coiled coil. The segment covering 563–574 (GSHSQVSITDDY) has biased composition (polar residues).

The protein is NEDD4-binding protein 2-like 2 (N4bp2l2) of Rattus norvegicus (Rat).